Reading from the N-terminus, the 402-residue chain is Mannonate dehydratase 1 (402 aa).

The protein belongs to the mannonate dehydratase family. Fe(2+) is required as a cofactor. Mn(2+) serves as cofactor.

The catalysed reaction is D-mannonate = 2-dehydro-3-deoxy-D-gluconate + H2O. It participates in carbohydrate metabolism; pentose and glucuronate interconversion. Its function is as follows. Catalyzes the dehydration of D-mannonate. The chain is Mannonate dehydratase 1 (uxuA1) from Agrobacterium fabrum (strain C58 / ATCC 33970) (Agrobacterium tumefaciens (strain C58)).